The primary structure comprises 689 residues: Glycine--tRNA ligase beta subunit (689 aa).

The protein belongs to the class-II aminoacyl-tRNA synthetase family. In terms of assembly, tetramer of two alpha and two beta subunits.

Its subcellular location is the cytoplasm. The enzyme catalyses tRNA(Gly) + glycine + ATP = glycyl-tRNA(Gly) + AMP + diphosphate. The sequence is that of Glycine--tRNA ligase beta subunit from Shigella boydii serotype 18 (strain CDC 3083-94 / BS512).